The chain runs to 309 residues: Methionyl-tRNA formyltransferase (309 aa).

110–113 lines the (6S)-5,6,7,8-tetrahydrofolate pocket; the sequence is SLLP. The disordered stretch occupies residues 289–309; that stretch reads KRMAATDWARGSRIEQGERLK. A compositionally biased stretch (basic and acidic residues) spans 298–309; that stretch reads RGSRIEQGERLK.

It belongs to the Fmt family.

It catalyses the reaction L-methionyl-tRNA(fMet) + (6R)-10-formyltetrahydrofolate = N-formyl-L-methionyl-tRNA(fMet) + (6S)-5,6,7,8-tetrahydrofolate + H(+). Attaches a formyl group to the free amino group of methionyl-tRNA(fMet). The formyl group appears to play a dual role in the initiator identity of N-formylmethionyl-tRNA by promoting its recognition by IF2 and preventing the misappropriation of this tRNA by the elongation apparatus. This Saccharopolyspora erythraea (strain ATCC 11635 / DSM 40517 / JCM 4748 / NBRC 13426 / NCIMB 8594 / NRRL 2338) protein is Methionyl-tRNA formyltransferase.